Here is a 295-residue protein sequence, read N- to C-terminus: Protoheme IX farnesyltransferase (295 aa).

Transmembrane regions (helical) follow at residues 24 to 43, 47 to 69, 94 to 114, 117 to 137, 144 to 164, 171 to 191, 216 to 236, 241 to 261, and 272 to 292; these read IMYLVVFTAVAGMVAAPGSI, LALISLICIALGSGSAGAINMWY, SALEFGVTIGVLSVFIMAIAV, ISAILLAIGILFYIFIYTIWL, NIVIGGASGAFPPVIGWAVVT, GFVLFLIIFMWTPPHFWALSL, KYILVYSVLLVLTSLLPALFL, FYLGMAIFGGCIFIWHAVSIM, and MFSYSISYLFFLFASIILCSI.

It belongs to the UbiA prenyltransferase family. Protoheme IX farnesyltransferase subfamily.

The protein localises to the cell membrane. It carries out the reaction heme b + (2E,6E)-farnesyl diphosphate + H2O = Fe(II)-heme o + diphosphate. It participates in porphyrin-containing compound metabolism; heme O biosynthesis; heme O from protoheme: step 1/1. Converts heme B (protoheme IX) to heme O by substitution of the vinyl group on carbon 2 of heme B porphyrin ring with a hydroxyethyl farnesyl side group. The polypeptide is Protoheme IX farnesyltransferase (Wolbachia sp. subsp. Brugia malayi (strain TRS)).